A 33-amino-acid polypeptide reads, in one-letter code: MAKRLLPVGLVVGEITKTDTINYRTFKPETGGL.

This sequence belongs to the RNA polymerase beta' chain family. RpoC1 subfamily. In terms of assembly, in plastids the minimal PEP RNA polymerase catalytic core is composed of four subunits: alpha, beta, beta', and beta''. When a (nuclear-encoded) sigma factor is associated with the core the holoenzyme is formed, which can initiate transcription.

It localises to the plastid. It is found in the chloroplast. The enzyme catalyses RNA(n) + a ribonucleoside 5'-triphosphate = RNA(n+1) + diphosphate. In terms of biological role, DNA-dependent RNA polymerase catalyzes the transcription of DNA into RNA using the four ribonucleoside triphosphates as substrates. The polypeptide is DNA-directed RNA polymerase subunit beta' (rpoC1) (Heterosigma akashiwo (Chromophytic alga)).